Reading from the N-terminus, the 226-residue chain is DELTA-alicitoxin-Pse1b (226 aa).

A signal peptide spans M1–A21. Residues K22–E45 constitute a propeptide that is removed on maturation. Residues T50–G59 form a plays an important role in the hemolytic activity region. Positions G58–D77 are N-terminal region. Positions 101, 134, 152, 154, 180, and 184 each coordinate phosphocholine. The interval S152–K167 is trp-rich region, which is important for the binding to lipid membrane.

The protein belongs to the actinoporin family. Sea anemone subfamily. Octamer or nonamer in membranes. Monomer in the soluble state.

It localises to the secreted. Its subcellular location is the nematocyst. The protein localises to the target cell membrane. Functionally, pore-forming protein that forms cations-selective hydrophilic pores of around 1 nm and causes cytolysis. Pore formation is a multi-step process that involves specific recognition of membrane sphingomyelin (but neither cholesterol nor phosphatidylcholine) using aromatic rich region and adjacent phosphocholine (POC) binding site, firm binding to the membrane (mainly driven by hydrophobic interactions) accompanied by the transfer of the N-terminal region to the lipid-water interface and finally pore formation after oligomerization of monomers. In Phyllodiscus semoni (Night anemone), this protein is DELTA-alicitoxin-Pse1b.